Consider the following 89-residue polypeptide: Small ribosomal subunit protein uS17 (89 aa).

This sequence belongs to the universal ribosomal protein uS17 family. As to quaternary structure, part of the 30S ribosomal subunit.

In terms of biological role, one of the primary rRNA binding proteins, it binds specifically to the 5'-end of 16S ribosomal RNA. This is Small ribosomal subunit protein uS17 from Verminephrobacter eiseniae (strain EF01-2).